The chain runs to 142 residues: Semaphorin-like protein VACWR164 (142 aa).

The 142-residue stretch at 1–142 (MNTIKQSFST…MPQMKKILKM (142 aa)) folds into the Sema domain.

Belongs to the semaphorin family.

This Bos taurus (Bovine) protein is Semaphorin-like protein VACWR164.